Consider the following 549-residue polypeptide: Coiled-coil domain-containing protein 102A (549 aa).

Disordered stretches follow at residues 1–61 (MSHG…TAPA), 135–195 (LAGA…GSQE), and 207–248 (PEEP…EEDA). Phosphoserine is present on residues S12, S26, and S28. Over residues 37-55 (SLPPTPPSGTPSPGPPPSL) the composition is skewed to pro residues. Residues 69-160 (ESREELRLRE…ARGRELARLR (92 aa)) adopt a coiled-coil conformation. Basic and acidic residues-rich tracts occupy residues 135–158 (LAGA…ELAR) and 165–187 (AADK…DIGA). 2 coiled-coil regions span residues 263-398 (KVLL…NASA) and 426-517 (KLKK…NAPL). Disordered stretches follow at residues 472–496 (ELDE…QSEN) and 509–549 (RRQQ…IQVA). Over residues 530–549 (EAGDGASDLDEDEDLQIQVA) the composition is skewed to acidic residues. Residue S536 is modified to Phosphoserine.

The chain is Coiled-coil domain-containing protein 102A (Ccdc102a) from Mus musculus (Mouse).